Consider the following 178-residue polypeptide: ATP synthase subunit delta (178 aa).

It belongs to the ATPase delta chain family. F-type ATPases have 2 components, F(1) - the catalytic core - and F(0) - the membrane proton channel. F(1) has five subunits: alpha(3), beta(3), gamma(1), delta(1), epsilon(1). F(0) has three main subunits: a(1), b(2) and c(10-14). The alpha and beta chains form an alternating ring which encloses part of the gamma chain. F(1) is attached to F(0) by a central stalk formed by the gamma and epsilon chains, while a peripheral stalk is formed by the delta and b chains.

The protein localises to the cell membrane. Its function is as follows. F(1)F(0) ATP synthase produces ATP from ADP in the presence of a proton or sodium gradient. F-type ATPases consist of two structural domains, F(1) containing the extramembraneous catalytic core and F(0) containing the membrane proton channel, linked together by a central stalk and a peripheral stalk. During catalysis, ATP synthesis in the catalytic domain of F(1) is coupled via a rotary mechanism of the central stalk subunits to proton translocation. This protein is part of the stalk that links CF(0) to CF(1). It either transmits conformational changes from CF(0) to CF(1) or is implicated in proton conduction. The chain is ATP synthase subunit delta from Moorella thermoacetica (strain ATCC 39073 / JCM 9320).